The chain runs to 43 residues: Potassium channel toxin gamma-KTx 4.7 (43 aa).

Cystine bridges form between Cys-5–Cys-23, Cys-11–Cys-34, Cys-20–Cys-39, and Cys-24–Cys-41.

The protein belongs to the ergtoxin family. Gamma-KTx 4 subfamily. Expressed by the venom gland.

The protein resides in the secreted. In terms of biological role, reversibly blocks Kv11/ERG potassium channels. This Centruroides limpidus (Mexican scorpion) protein is Potassium channel toxin gamma-KTx 4.7.